A 1657-amino-acid polypeptide reads, in one-letter code: Androglobin (1657 aa).

The span at Met-1 to Val-11 shows a compositional bias: basic residues. 2 disordered regions span residues Met-1 to Gln-40 and Thr-321 to Val-398. The Calpain catalytic domain maps to Lys-70–Met-402. The span at Thr-321–Lys-386 shows a compositional bias: basic and acidic residues. One can recognise a Globin; C-terminal part domain in the interval His-762–Asp-889. Residues Gln-791 and His-823 each contribute to the heme b site. The region spanning Glu-905–Glu-934 is the IQ domain. Residues Asn-935–Ser-967 form the Globin; N-terminal part domain. Disordered stretches follow at residues Ser-1184–Gly-1226, Lys-1288–Pro-1356, Thr-1422–Lys-1459, and Ile-1638–Lys-1657. Basic and acidic residues predominate over residues Glu-1321–Pro-1336. Composition is skewed to polar residues over residues Gln-1341 to Ser-1351 and Thr-1422 to Lys-1443. The stretch at Asp-1585–Lys-1640 forms a coiled coil.

In the central section; belongs to the globin family. It in the N-terminal section; belongs to the peptidase C2 family. As to quaternary structure, interacts with septin SEPT10; contributes to in vitro proteolytic cleavage of SEPT10 in a calmodulin-dependent manner. Interacts with CFAP69. Interacts with SPEF2. May interact with calmodulin. As to expression, strongly expressed in testis and lung. Weakly expressed in heart, brain, spleen, kidney and tongue.

It is found in the cell projection. It localises to the cilium. The protein resides in the flagellum. Probable chimeric globin with a bis-histidyl six-coordinate heme-iron atom through which it could bind dioxygen, carbon monoxide and nitric oxide. Required for sperm flagellum formation and maturation of elongating spermatids, thus playing an essential role in male fertility. The protein is Androglobin of Mus musculus (Mouse).